A 505-amino-acid chain; its full sequence is ATP synthase subunit alpha (505 aa).

170–177 is an ATP binding site; it reads GDRQTGKT.

This sequence belongs to the ATPase alpha/beta chains family. In terms of assembly, F-type ATPases have 2 components, CF(1) - the catalytic core - and CF(0) - the membrane proton channel. CF(1) has five subunits: alpha(3), beta(3), gamma(1), delta(1), epsilon(1). CF(0) has four main subunits: a(1), b(1), b'(1) and c(9-12).

The protein resides in the cellular thylakoid membrane. It catalyses the reaction ATP + H2O + 4 H(+)(in) = ADP + phosphate + 5 H(+)(out). Its function is as follows. Produces ATP from ADP in the presence of a proton gradient across the membrane. The alpha chain is a regulatory subunit. The protein is ATP synthase subunit alpha of Synechococcus sp. (strain ATCC 27144 / PCC 6301 / SAUG 1402/1) (Anacystis nidulans).